The primary structure comprises 161 residues: Hydrogenase expression/formation protein HoxO (161 aa).

It belongs to the HupG/HyaE family.

The polypeptide is Hydrogenase expression/formation protein HoxO (hoxO) (Cupriavidus necator (strain ATCC 17699 / DSM 428 / KCTC 22496 / NCIMB 10442 / H16 / Stanier 337) (Ralstonia eutropha)).